The following is a 314-amino-acid chain: Cytosolic sulfotransferase 3 (314 aa).

71 to 76 (KSGTLW) contacts 3'-phosphoadenylyl sulfate. The active-site Proton acceptor is histidine 121. 3'-phosphoadenylyl sulfate-binding positions include arginine 143, serine 151, tyrosine 209, and 275-277 (RKG).

Belongs to the sulfotransferase 1 family.

It localises to the cytoplasm. In terms of biological role, sulfotransferase that utilizes 3'-phospho-5'-adenylyl sulfate (PAPS) as sulfonate donor. This Arabidopsis thaliana (Mouse-ear cress) protein is Cytosolic sulfotransferase 3 (SOT3).